The following is a 407-amino-acid chain: Vancomycin aglycone glucosyltransferase (407 aa).

This sequence belongs to the glycosyltransferase 28 family.

The enzyme catalyses vancomycin aglycone + UDP-alpha-D-glucose = devancoaminyl-vancomycin + UDP. It functions in the pathway antibiotic biosynthesis; vancomycin biosynthesis. Its function is as follows. Glucosyltransferase that transfers glucose to the 4-OH-Phegly(4) residue of vancomycin aglycone (AGV) to produce devancoaminyl-vancomycin (DVV) in the biosynthesis of glycopeptide antibiotic chloroeremomycin, a member of the vancomycin group of antibiotics. This Amycolatopsis orientalis (Nocardia orientalis) protein is Vancomycin aglycone glucosyltransferase (gtfB).